Reading from the N-terminus, the 757-residue chain is Double zinc ribbon and ankyrin repeat-containing protein 1 (757 aa).

2 consecutive DZANK-type zinc fingers follow at residues 230-290 (CAHC…VVCE) and 359-407 (CSRC…GSCG). ANK repeat units lie at residues 631–662 (ENRL…DPNC) and 666–695 (QGRP…DIDQ).

As to quaternary structure, interacts with NINL. Associates with DYNC1H1 and multiple dynein intermediate and light chains as well as actin-binding proteins. In terms of tissue distribution, expressed in retina.

It localises to the cell projection. The protein resides in the cilium. Functionally, involved in vesicle transport in photoreceptor cells. The sequence is that of Double zinc ribbon and ankyrin repeat-containing protein 1 from Rattus norvegicus (Rat).